The primary structure comprises 271 residues: Mannosyl-3-phosphoglycerate phosphatase (271 aa).

The Nucleophile role is filled by Asp-13. The Mg(2+) site is built by Asp-13, Asp-15, and Asp-214.

It belongs to the HAD-like hydrolase superfamily. MPGP family. Mg(2+) serves as cofactor.

It localises to the cytoplasm. It carries out the reaction 2-O-(alpha-D-mannosyl)-3-phosphoglycerate + H2O = (2R)-2-O-(alpha-D-mannosyl)-glycerate + phosphate. This chain is Mannosyl-3-phosphoglycerate phosphatase, found in Escherichia coli O7:K1 (strain IAI39 / ExPEC).